Consider the following 125-residue polypeptide: Histone H2A, orphon (125 aa).

Positions 1–18 are enriched in basic residues; that stretch reads MSGRGKGGKVKAKAKSRS. The interval 1-21 is disordered; sequence MSGRGKGGKVKAKAKSRSSRA. Residue serine 2 is modified to N-acetylserine. Serine 2 carries the phosphoserine modification. Lysine 119 is covalently cross-linked (Glycyl lysine isopeptide (Lys-Gly) (interchain with G-Cter in ubiquitin)).

It belongs to the histone H2A family. As to quaternary structure, the nucleosome is a histone octamer containing two molecules each of H2A, H2B, H3 and H4 assembled in one H3-H4 heterotetramer and two H2A-H2B heterodimers. The octamer wraps approximately 147 bp of DNA. Monoubiquitination of Lys-119 gives a specific tag for epigenetic transcriptional repression. In terms of processing, phosphorylation on Ser-2 is enhanced during mitosis. Phosphorylation on Ser-2 directly represses transcription.

The protein localises to the nucleus. It localises to the chromosome. In terms of biological role, core component of nucleosome. Nucleosomes wrap and compact DNA into chromatin, limiting DNA accessibility to the cellular machineries which require DNA as a template. Histones thereby play a central role in transcription regulation, DNA repair, DNA replication and chromosomal stability. DNA accessibility is regulated via a complex set of post-translational modifications of histones, also called histone code, and nucleosome remodeling. The polypeptide is Histone H2A, orphon (Chironomus thummi thummi (Midge)).